The primary structure comprises 156 residues: Aspartate carbamoyltransferase regulatory chain (156 aa).

Zn(2+) contacts are provided by cysteine 109, cysteine 114, cysteine 140, and cysteine 143.

Belongs to the PyrI family. Contains catalytic and regulatory chains. Requires Zn(2+) as cofactor.

In terms of biological role, involved in allosteric regulation of aspartate carbamoyltransferase. The polypeptide is Aspartate carbamoyltransferase regulatory chain (Methanosarcina acetivorans (strain ATCC 35395 / DSM 2834 / JCM 12185 / C2A)).